The following is a 343-amino-acid chain: Probable siderophore transport system permease protein YfhA (343 aa).

A run of 9 helical transmembrane segments spans residues tryptophan 15–leucine 35, isoleucine 69–leucine 89, proline 97–phenylalanine 117, tryptophan 130–alanine 150, leucine 160–isoleucine 180, glutamine 204–leucine 224, phenylalanine 249–isoleucine 269, glycine 289–valine 309, and valine 317–leucine 337.

The protein belongs to the binding-protein-dependent transport system permease family. FecCD subfamily. The complex is composed of one ATP-binding protein (YusV), two transmembrane proteins (YfiZ and YfhA) and a solute-binding protein (YfiY).

Its subcellular location is the cell membrane. Functionally, part of the ABC transporter complex YfiYZ/YfhA/YusV involved in import of the iron-hydroxamate siderophores schizokinen, arthrobactin and corprogen. In Bacillus subtilis (strain 168), this protein is Probable siderophore transport system permease protein YfhA (yfhA).